Here is a 233-residue protein sequence, read N- to C-terminus: Lectin (233 aa).

N-linked (GlcNAc...) asparagine glycosylation is found at N26 and N108. Mn(2+) is bound by residues E118 and D120. Positions 120, 122, 124, and 129 each coordinate Ca(2+). The Mn(2+) site is built by E129 and H134.

Belongs to the leguminous lectin family. Monomer.

The protein localises to the secreted. Functionally, has metal-independent hemagglutinating activity towards erythrocytes from rabbit and human. Hemagglutinating activity is inhibited by glycoproteins fetuin, asialo-fetuin, thyroglobulin and azocasein but not by free carbohydrates. Inhibits ADP- and epinephrin-induced but not collagen-, fibrinogen, thrombin- or arachidonic acid-induced platelet aggregation in vitro. Has anticoagulant activity in vitro. This is Lectin from Bauhinia forficata (Brazilian orchid-tree).